A 453-amino-acid chain; its full sequence is Mitochondrial import inner membrane translocase subunit TIM44 (453 aa).

The residue at position 129 (Thr129) is a Phosphothreonine. 167–174 (GGEKLGKT) lines the ATP pocket. Lys178 carries the N6-succinyllysine modification. A Phosphoserine modification is found at Ser181. The residue at position 218 (Lys218) is an N6-succinyllysine.

The protein belongs to the Tim44 family. In terms of assembly, probable component of the PAM complex at least composed of a mitochondrial HSP70 protein, GRPEL1 or GRPEL2, TIMM44, TIMM16/PAM16 and TIMM14/DNAJC19. The complex interacts with the TIMM23 component of the TIM23 complex. Interacts with SLC25A4/ANT1 and SLC25A5/ANT2; leading to inhibit the presequence translocase TIMM23, thereby promoting stabilization of PINK1.

It is found in the mitochondrion inner membrane. It localises to the mitochondrion matrix. In terms of biological role, essential component of the PAM complex, a complex required for the translocation of transit peptide-containing proteins from the inner membrane into the mitochondrial matrix in an ATP-dependent manner. Recruits mitochondrial HSP70 to drive protein translocation into the matrix using ATP as an energy source. In Rattus norvegicus (Rat), this protein is Mitochondrial import inner membrane translocase subunit TIM44 (Timm44).